Here is a 315-residue protein sequence, read N- to C-terminus: Uracil-DNA glycosylase (315 aa).

Over residues 35-80 the composition is skewed to low complexity; that stretch reads AAAAAPAGAGAGASKPARPPAAARPAKGTPAASAATTATGADASAP. The disordered stretch occupies residues 35–88; it reads AAAAAPAGAGAGASKPARPPAAARPAKGTPAASAATTATGADASAPAPDPGAPT. The active-site Proton acceptor is D158.

The protein belongs to the uracil-DNA glycosylase (UDG) superfamily. UNG family.

Its subcellular location is the host nucleus. The catalysed reaction is Hydrolyzes single-stranded DNA or mismatched double-stranded DNA and polynucleotides, releasing free uracil.. Excises uracil residues from the DNA which can arise as a result of misincorporation of dUMP residues by DNA polymerase or deamination of cytosines. Therefore may reduce deleterious uracil incorporation into the viral genome, particularly in terminally differentiated cells which lack DNA repair enzymes. The protein is Uracil-DNA glycosylase (UL2) of Suid herpesvirus 1 (strain Indiana-Funkhauser / Becker) (SuHV-1).